The primary structure comprises 200 residues: CASP-like protein 1U2 (200 aa).

The Cytoplasmic portion of the chain corresponds to 1–33 (MAEPVIVVPRKGVYSDDSYHHHHRHHSFHSCTN). A helical membrane pass occupies residues 34-54 (FLLRTLTAGATAAAVVVMLIS). Topologically, residues 55–77 (TQTSGTIYGYFRGRWRDYPAYKW) are extracellular. Residues 78–98 (LIIANAVVFVYSVMAAIVACF) form a helical membrane-spanning segment. Residues 99-120 (SVIARRGPLSYSPSAWLTLLVD) lie on the Cytoplasmic side of the membrane. The chain crosses the membrane as a helical span at residues 121–141 (FLAASALISAASAALAVALLA). The Extracellular portion of the chain corresponds to 142–168 (RNGQDLQGTHYWPTVCNYVSKFCDYTQ). Residues 169–189 (GAIIASFVGFGLLFLSTLLAA) traverse the membrane as a helical segment. At 190 to 200 (SALYHLSHRRH) the chain is on the cytoplasmic side.

Belongs to the Casparian strip membrane proteins (CASP) family. As to quaternary structure, homodimer and heterodimers.

The protein resides in the cell membrane. This Physcomitrium patens (Spreading-leaved earth moss) protein is CASP-like protein 1U2.